A 190-amino-acid chain; its full sequence is Xanthine phosphoribosyltransferase (190 aa).

Xanthine contacts are provided by L20 and N27. 5-phospho-alpha-D-ribose 1-diphosphate is bound at residue 128–132 (ANGHA). K156 is a xanthine binding site.

The protein belongs to the purine/pyrimidine phosphoribosyltransferase family. Xpt subfamily. In terms of assembly, homodimer.

Its subcellular location is the cytoplasm. The enzyme catalyses XMP + diphosphate = xanthine + 5-phospho-alpha-D-ribose 1-diphosphate. It participates in purine metabolism; XMP biosynthesis via salvage pathway; XMP from xanthine: step 1/1. Functionally, converts the preformed base xanthine, a product of nucleic acid breakdown, to xanthosine 5'-monophosphate (XMP), so it can be reused for RNA or DNA synthesis. This is Xanthine phosphoribosyltransferase from Pseudomonas paraeruginosa (strain DSM 24068 / PA7) (Pseudomonas aeruginosa (strain PA7)).